We begin with the raw amino-acid sequence, 296 residues long: Ribosomal protein L11 methyltransferase (296 aa).

S-adenosyl-L-methionine contacts are provided by Thr145, Gly166, Asp188, and Asn230.

The protein belongs to the methyltransferase superfamily. PrmA family.

The protein resides in the cytoplasm. It carries out the reaction L-lysyl-[protein] + 3 S-adenosyl-L-methionine = N(6),N(6),N(6)-trimethyl-L-lysyl-[protein] + 3 S-adenosyl-L-homocysteine + 3 H(+). Its function is as follows. Methylates ribosomal protein L11. The chain is Ribosomal protein L11 methyltransferase from Histophilus somni (strain 2336) (Haemophilus somnus).